The primary structure comprises 324 residues: Protein GET4 (324 aa).

Belongs to the GET4 family. Interacts with GET3A.

The protein localises to the cytoplasm. The protein resides in the cytosol. Functionally, involved in the regulation of root hair growth. The chain is Protein GET4 from Arabidopsis thaliana (Mouse-ear cress).